The following is a 450-amino-acid chain: Bifunctional protein GlmU (450 aa).

Residues 1-226 (MLAVAVLAAG…ADEVNGINNR (226 aa)) form a pyrophosphorylase region. UDP-N-acetyl-alpha-D-glucosamine contacts are provided by residues 7 to 10 (LAAG), K21, Q73, and 78 to 79 (GT). D103 serves as a coordination point for Mg(2+). Residues G140, E155, N170, and N224 each contribute to the UDP-N-acetyl-alpha-D-glucosamine site. N224 serves as a coordination point for Mg(2+). The segment at 227-247 (RQLAQCEALLQQRLRHHWMDE) is linker. An N-acetyltransferase region spans residues 248-450 (GVTFIDPESC…TKEGWAERKV (203 aa)). UDP-N-acetyl-alpha-D-glucosamine contacts are provided by R329 and K347. Residue H359 is the Proton acceptor of the active site. Positions 362 and 373 each coordinate UDP-N-acetyl-alpha-D-glucosamine. Acetyl-CoA contacts are provided by residues A376, 382-383 (NY), A419, and R436.

In the N-terminal section; belongs to the N-acetylglucosamine-1-phosphate uridyltransferase family. This sequence in the C-terminal section; belongs to the transferase hexapeptide repeat family. Homotrimer. Mg(2+) serves as cofactor.

The protein localises to the cytoplasm. The enzyme catalyses alpha-D-glucosamine 1-phosphate + acetyl-CoA = N-acetyl-alpha-D-glucosamine 1-phosphate + CoA + H(+). It carries out the reaction N-acetyl-alpha-D-glucosamine 1-phosphate + UTP + H(+) = UDP-N-acetyl-alpha-D-glucosamine + diphosphate. It functions in the pathway nucleotide-sugar biosynthesis; UDP-N-acetyl-alpha-D-glucosamine biosynthesis; N-acetyl-alpha-D-glucosamine 1-phosphate from alpha-D-glucosamine 6-phosphate (route II): step 2/2. Its pathway is nucleotide-sugar biosynthesis; UDP-N-acetyl-alpha-D-glucosamine biosynthesis; UDP-N-acetyl-alpha-D-glucosamine from N-acetyl-alpha-D-glucosamine 1-phosphate: step 1/1. The protein operates within bacterial outer membrane biogenesis; LPS lipid A biosynthesis. In terms of biological role, catalyzes the last two sequential reactions in the de novo biosynthetic pathway for UDP-N-acetylglucosamine (UDP-GlcNAc). The C-terminal domain catalyzes the transfer of acetyl group from acetyl coenzyme A to glucosamine-1-phosphate (GlcN-1-P) to produce N-acetylglucosamine-1-phosphate (GlcNAc-1-P), which is converted into UDP-GlcNAc by the transfer of uridine 5-monophosphate (from uridine 5-triphosphate), a reaction catalyzed by the N-terminal domain. This chain is Bifunctional protein GlmU, found in Synechococcus sp. (strain CC9605).